A 443-amino-acid chain; its full sequence is Threonine/serine transporter TdcC (443 aa).

11 helical membrane passes run 22–42 (TTWT…FFPI), 44–64 (AGFG…PIAF), 97–117 (GVVI…IYGV), 140–160 (FVAL…KDLM), 163–183 (VMSF…LSLI), 207–227 (ILVT…FSPI), 259–279 (ASLL…FTLS), 319–339 (ASII…LGTL), 366–386 (ISMI…PNIL), 389–409 (IEAM…MFAI), and 423–443 (ENLF…YKLF).

It belongs to the amino acid/polyamine transporter 2 family. SdaC/TdcC subfamily.

The protein localises to the cell inner membrane. The catalysed reaction is L-threonine(in) + H(+)(in) = L-threonine(out) + H(+)(out). The enzyme catalyses L-serine(in) + H(+)(in) = L-serine(out) + H(+)(out). In terms of biological role, involved in the import of threonine and serine into the cell, with the concomitant import of a proton (symport system). The polypeptide is Threonine/serine transporter TdcC (Enterobacter sp. (strain 638)).